A 288-amino-acid polypeptide reads, in one-letter code: Elongation factor Ts (288 aa).

The tract at residues 82-85 (TDFV) is involved in Mg(2+) ion dislocation from EF-Tu.

It belongs to the EF-Ts family.

It is found in the cytoplasm. Functionally, associates with the EF-Tu.GDP complex and induces the exchange of GDP to GTP. It remains bound to the aminoacyl-tRNA.EF-Tu.GTP complex up to the GTP hydrolysis stage on the ribosome. This Chlorobium phaeovibrioides (strain DSM 265 / 1930) (Prosthecochloris vibrioformis (strain DSM 265)) protein is Elongation factor Ts.